Here is a 222-residue protein sequence, read N- to C-terminus: N-(5'-phosphoribosyl)anthranilate isomerase (222 aa).

The protein belongs to the TrpF family.

The catalysed reaction is N-(5-phospho-beta-D-ribosyl)anthranilate = 1-(2-carboxyphenylamino)-1-deoxy-D-ribulose 5-phosphate. It participates in amino-acid biosynthesis; L-tryptophan biosynthesis; L-tryptophan from chorismate: step 3/5. The protein is N-(5'-phosphoribosyl)anthranilate isomerase of Rhizobium rhizogenes (strain K84 / ATCC BAA-868) (Agrobacterium radiobacter).